The chain runs to 204 residues: Isochorismatase domain-containing protein 2 (204 aa).

It belongs to the isochorismatase family. As to quaternary structure, interacts with CDKN2A.

It is found in the cytoplasm. The protein localises to the nucleus. This is Isochorismatase domain-containing protein 2 (ISOC2) from Bos taurus (Bovine).